The sequence spans 529 residues: Putative amidohydrolase YtcJ (529 aa).

Belongs to the metallo-dependent hydrolases superfamily.

This is Putative amidohydrolase YtcJ (ytcJ) from Bacillus subtilis (strain 168).